The primary structure comprises 408 residues: Arginine biosynthesis bifunctional protein ArgJ 1 (408 aa).

Residues T154, K180, T191, E277, N403, and S408 each contribute to the substrate site. T191 acts as the Nucleophile in catalysis.

It belongs to the ArgJ family. As to quaternary structure, heterotetramer of two alpha and two beta chains.

It localises to the cytoplasm. The catalysed reaction is N(2)-acetyl-L-ornithine + L-glutamate = N-acetyl-L-glutamate + L-ornithine. It carries out the reaction L-glutamate + acetyl-CoA = N-acetyl-L-glutamate + CoA + H(+). It participates in amino-acid biosynthesis; L-arginine biosynthesis; L-ornithine and N-acetyl-L-glutamate from L-glutamate and N(2)-acetyl-L-ornithine (cyclic): step 1/1. It functions in the pathway amino-acid biosynthesis; L-arginine biosynthesis; N(2)-acetyl-L-ornithine from L-glutamate: step 1/4. Catalyzes two activities which are involved in the cyclic version of arginine biosynthesis: the synthesis of N-acetylglutamate from glutamate and acetyl-CoA as the acetyl donor, and of ornithine by transacetylation between N(2)-acetylornithine and glutamate. This chain is Arginine biosynthesis bifunctional protein ArgJ 1, found in Clostridium acetobutylicum (strain ATCC 824 / DSM 792 / JCM 1419 / IAM 19013 / LMG 5710 / NBRC 13948 / NRRL B-527 / VKM B-1787 / 2291 / W).